A 714-amino-acid chain; its full sequence is Fatty acid oxidation complex subunit alpha (714 aa).

Residues 1 to 190 (MEMASVFTLN…KLGLVDDVVP (190 aa)) form an enoyl-CoA hydratase region. Residues 306–714 (APLNSVGILG…FWKTTATDLQ (409 aa)) are 3-hydroxyacyl-CoA dehydrogenase.

It in the N-terminal section; belongs to the enoyl-CoA hydratase/isomerase family. In the central section; belongs to the 3-hydroxyacyl-CoA dehydrogenase family. As to quaternary structure, heterotetramer of two alpha chains (FadJ) and two beta chains (FadI).

It localises to the cytoplasm. It carries out the reaction a (3S)-3-hydroxyacyl-CoA = a (2E)-enoyl-CoA + H2O. The catalysed reaction is a 4-saturated-(3S)-3-hydroxyacyl-CoA = a (3E)-enoyl-CoA + H2O. The enzyme catalyses a (3S)-3-hydroxyacyl-CoA + NAD(+) = a 3-oxoacyl-CoA + NADH + H(+). It catalyses the reaction (3S)-3-hydroxybutanoyl-CoA = (3R)-3-hydroxybutanoyl-CoA. Its pathway is lipid metabolism; fatty acid beta-oxidation. In terms of biological role, catalyzes the formation of a hydroxyacyl-CoA by addition of water on enoyl-CoA. Also exhibits 3-hydroxyacyl-CoA epimerase and 3-hydroxyacyl-CoA dehydrogenase activities. The chain is Fatty acid oxidation complex subunit alpha from Escherichia coli O139:H28 (strain E24377A / ETEC).